The following is a 242-amino-acid chain: Ras-like protein family member 11A (242 aa).

The segment at 17–241 (ESSSDYLLPK…SSKAKAASTL (225 aa)) is small GTPase-like. GTP is bound by residues 34-41 (GASCVGKS), 81-85 (DTPGG), and 147-150 (NKGD).

The protein belongs to the small GTPase superfamily. Ras family. Interacts with UBF/UBTF.

The protein resides in the nucleus. It is found in the nucleolus. The enzyme catalyses GTP + H2O = GDP + phosphate + H(+). Regulator of rDNA transcription. Acts in cooperation UBF/UBTF and positively regulates RNA polymerase I transcription. The sequence is that of Ras-like protein family member 11A from Rattus norvegicus (Rat).